Here is a 21-residue protein sequence, read N- to C-terminus: Large ribosomal subunit protein uL29 (21 aa).

It belongs to the universal ribosomal protein uL29 family.

The chain is Large ribosomal subunit protein uL29 (rpmC) from Brevundimonas diminuta (Pseudomonas diminuta).